Consider the following 429-residue polypeptide: Ribosomal RNA small subunit methyltransferase B (429 aa).

Residues 254–260 (CAAPGGK), D277, D303, and D322 each bind S-adenosyl-L-methionine. The Nucleophile role is filled by C375. The interval 397–419 (ALSETGTPDQPGQQNLPGGEEGD) is disordered. Positions 400–412 (ETGTPDQPGQQNL) are enriched in polar residues.

It belongs to the class I-like SAM-binding methyltransferase superfamily. RsmB/NOP family.

The protein localises to the cytoplasm. It catalyses the reaction cytidine(967) in 16S rRNA + S-adenosyl-L-methionine = 5-methylcytidine(967) in 16S rRNA + S-adenosyl-L-homocysteine + H(+). Its function is as follows. Specifically methylates the cytosine at position 967 (m5C967) of 16S rRNA. The sequence is that of Ribosomal RNA small subunit methyltransferase B from Salmonella heidelberg (strain SL476).